The chain runs to 309 residues: Mitochondrial glycine transporter (309 aa).

3 Solcar repeats span residues 2-94, 124-207, and 219-304; these read SNVG…LRAL, LTSQ…IKHE, and QATL…GLML. 6 consecutive transmembrane segments (helical) span residues 8–33, 69–95, 130–155, 182–205, 223–249, and 279–297; these read LLSG…TRLQ, GTTP…RALM, LIAG…ARFE, GFLA…EGIK, IHGL…KTKI, and GASL…GWAV.

It belongs to the mitochondrial carrier (TC 2.A.29) family. SLC25A38 subfamily.

The protein resides in the mitochondrion inner membrane. It catalyses the reaction glycine(in) = glycine(out). Mitochondrial glycine transporter that imports glycine into the mitochondrial matrix. Plays an important role in providing glycine for the first enzymatic step in heme biosynthesis, the condensation of glycine with succinyl-CoA to produce 5-aminolevulinate (ALA) in the mitochondrial matrix. This is Mitochondrial glycine transporter from Laccaria bicolor (strain S238N-H82 / ATCC MYA-4686) (Bicoloured deceiver).